The primary structure comprises 539 residues: Hydroxylamine reductase (539 aa).

4 residues coordinate [4Fe-4S] cluster: Cys3, Cys6, Cys14, and Cys20. Residues His232, Glu256, Cys300, Cys392, Cys420, Cys445, Glu480, and Lys482 each contribute to the hybrid [4Fe-2O-2S] cluster site. The residue at position 392 (Cys392) is a Cysteine persulfide.

The protein belongs to the HCP family. It depends on [4Fe-4S] cluster as a cofactor. Hybrid [4Fe-2O-2S] cluster is required as a cofactor.

Its subcellular location is the cytoplasm. It carries out the reaction A + NH4(+) + H2O = hydroxylamine + AH2 + H(+). In terms of biological role, catalyzes the reduction of hydroxylamine to form NH(3) and H(2)O. This Chlorobaculum tepidum (strain ATCC 49652 / DSM 12025 / NBRC 103806 / TLS) (Chlorobium tepidum) protein is Hydroxylamine reductase.